The following is a 373-amino-acid chain: Arabinonate dehydratase (373 aa).

Positions 199, 225, and 251 each coordinate Mg(2+).

Belongs to the mandelate racemase/muconate lactonizing enzyme family. Homooctamer. Mg(2+) serves as cofactor.

It catalyses the reaction D-arabinonate = 2-dehydro-3-deoxy-D-arabinonate + H2O. With respect to regulation, inhibited by substrate levels above 8 mM. In terms of biological role, catalyzes the dehydration of D-arabinonate to 2-keto-3-deoxy-D-arabinonate. Participates in a pentose oxidation pathway that converts D-arabinonate to 2-oxoglutarate. The sequence is that of Arabinonate dehydratase from Saccharolobus solfataricus (strain ATCC 35092 / DSM 1617 / JCM 11322 / P2) (Sulfolobus solfataricus).